The chain runs to 872 residues: Protein translocase subunit SecA (872 aa).

Residues Q87, 105–109, and D500 each bind ATP; that span reads GEGKT. Zn(2+) is bound by residues C855, C857, C866, and H867.

The protein belongs to the SecA family. As to quaternary structure, monomer and homodimer. Part of the essential Sec protein translocation apparatus which comprises SecA, SecYEG and auxiliary proteins SecDF-YajC and YidC. The cofactor is Zn(2+).

The protein resides in the cell inner membrane. The protein localises to the cytoplasm. The enzyme catalyses ATP + H2O + cellular proteinSide 1 = ADP + phosphate + cellular proteinSide 2.. Its function is as follows. Part of the Sec protein translocase complex. Interacts with the SecYEG preprotein conducting channel. Has a central role in coupling the hydrolysis of ATP to the transfer of proteins into and across the cell membrane, serving both as a receptor for the preprotein-SecB complex and as an ATP-driven molecular motor driving the stepwise translocation of polypeptide chains across the membrane. The polypeptide is Protein translocase subunit SecA (Anaplasma marginale (strain St. Maries)).